Consider the following 125-residue polypeptide: Large ribosomal subunit protein bL12 (125 aa).

It belongs to the bacterial ribosomal protein bL12 family. Homodimer. Part of the ribosomal stalk of the 50S ribosomal subunit. Forms a multimeric L10(L12)X complex, where L10 forms an elongated spine to which 2 to 4 L12 dimers bind in a sequential fashion. Binds GTP-bound translation factors.

Its function is as follows. Forms part of the ribosomal stalk which helps the ribosome interact with GTP-bound translation factors. Is thus essential for accurate translation. The protein is Large ribosomal subunit protein bL12 of Mesorhizobium japonicum (strain LMG 29417 / CECT 9101 / MAFF 303099) (Mesorhizobium loti (strain MAFF 303099)).